A 661-amino-acid polypeptide reads, in one-letter code: Ubiquitin carboxyl-terminal hydrolase 25 (661 aa).

The 312-residue stretch at 24–335 (LGLRNLGNTC…KAYILFFSRS (312 aa)) folds into the USP domain. Cysteine 33 (nucleophile) is an active-site residue. Histidine 294 (proton acceptor) is an active-site residue. Disordered regions lie at residues 387–406 (GNLASSKPHKFIRPKPRAEQ) and 449–558 (FHQD…LCSS). Basic and acidic residues predominate over residues 449–461 (FHQDENIAPKANK). Polar residues-rich tracts occupy residues 462-475 (ENSVSVLPTKVNSG) and 545-558 (NGVSTTQSKGLCSS).

This sequence belongs to the peptidase C19 family.

The catalysed reaction is Thiol-dependent hydrolysis of ester, thioester, amide, peptide and isopeptide bonds formed by the C-terminal Gly of ubiquitin (a 76-residue protein attached to proteins as an intracellular targeting signal).. Functionally, recognizes and hydrolyzes the peptide bond at the C-terminal Gly of ubiquitin. Involved in the processing of poly-ubiquitin precursors as well as that of ubiquitinated proteins. The polypeptide is Ubiquitin carboxyl-terminal hydrolase 25 (UBP25) (Arabidopsis thaliana (Mouse-ear cress)).